A 98-amino-acid chain; its full sequence is UPF0473 protein GTNG_2486 (98 aa).

This sequence belongs to the UPF0473 family.

This is UPF0473 protein GTNG_2486 from Geobacillus thermodenitrificans (strain NG80-2).